Here is a 708-residue protein sequence, read N- to C-terminus: MEANHQRNDLGLVALTMLAQYHNISLNPEEIKHKFDLDGKGLSLTAWLLAAKSLALKAKHIKKEISRLHLVNLPALVWQDNGKHFLLVKVDTDNNRYLTYNLEQDAPQILSQDEFEACYQGQLILVTSRASVVGQLAKFDFTWFIPAVIKYRKIFLETLIVSIFLQIFALITPLFFQVVMDKVLVHRGFSTLNIITVALAIVIIFEIVLSGLRTYVFSHSTSRIDVELGAKLFRHLLSLPISYFENRRVGDTVARVRELDQIRNFLTGQALTSVLDLLFSFIFFAVMWYYSPKLTLVILGSLPCYILWSIFISPILRRRLDEKFARSADNQAFLVESVTSINMIKAMAVAPQMTDTWDKQLASYVSSSFRVTVLATIGQQGVQLIQKTVMVINLWLGAHLVISGDLSIGQLIAFNMLSGQVIAPVIRLAQLWQDFQQVGISVTRLGDVLNSPTEQYQGKLSLPEIKGDISFKNIRFRYKPDAPTILNNVNLEIRQGEVIGIVGRSGSGKSTLTKLLQRFYIPENGQVLIDGHDLALADPNWLRRQIGVVLQDNVLLNRSIRENIALSDPGMPMERVIYAAKLAGAHDFISELREGYNTIVGEQGAGLSGGQRQRIAIARALVNNPKILIFDEATSALDYESEHIIMQNMQKICQGRTVILIAHRLSTVKNADRIIVMEKGEIVEQGKHHELLQNSNGLYSYLHQLQLN.

Residues M1 to V126 form the Peptidase C39 domain. Residues F155–Q437 enclose the ABC transmembrane type-1 domain. 5 helical membrane-spanning segments follow: residues L159–V179, L192–L212, A270–Y290, L296–L316, and V389–G409. One can recognise an ABC transporter domain in the interval I469–Q704. G503–S510 contacts ATP.

Belongs to the ABC transporter superfamily. Protein-1 exporter (TC 3.A.1.109) family. In terms of assembly, homodimer.

Its subcellular location is the cell inner membrane. It carries out the reaction ATP + H2O + proteinSide 1 = ADP + phosphate + proteinSide 2.. Its function is as follows. Part of the ABC transporter complex LktBD involved in leukotoxin export. Transmembrane domains (TMD) form a pore in the inner membrane and the ATP-binding domain (NBD) is responsible for energy generation. The sequence is that of Leukotoxin translocation ATP-binding protein LktB (lktB) from Mannheimia haemolytica (Pasteurella haemolytica).